A 130-amino-acid polypeptide reads, in one-letter code: Cyclin-dependent kinase 4 inhibitor B (130 aa).

ANK repeat units lie at residues 5 to 34 (GSDAGLATAAARGQVETVRQLLEAGADPNA), 38 to 66 (FGRRPIQVMMMGSAQVAELLLLHGAEPNC), 71 to 100 (TLTRPVHDAAREGFLDTLMVLHKAGARLDV), and 104 to 130 (WGRLPVDLAEEQGHRDIARYLHAATGD). Position 12 is a phosphothreonine (Thr-12).

This sequence belongs to the CDKN2 cyclin-dependent kinase inhibitor family. Heterodimer of CDKN2B with CDK4 or CDK6. Expression abundant in lung, less abundant in testis, barely detectable in liver, and not detectable in neonatal kidney, adult kidney, brain, heart, or spleen.

Its function is as follows. Interacts strongly with CDK4 and CDK6. Potent inhibitor. Potential effector of TGF-beta induced cell cycle arrest. The chain is Cyclin-dependent kinase 4 inhibitor B (Cdkn2b) from Rattus norvegicus (Rat).